Here is a 221-residue protein sequence, read N- to C-terminus: Ribosomal RNA small subunit methyltransferase Nep1 (221 aa).

Residues Gly-174, Gly-179, and 196 to 201 (IGNVSL) contribute to the S-adenosyl-L-methionine site.

Belongs to the class IV-like SAM-binding methyltransferase superfamily. RNA methyltransferase NEP1 family. In terms of assembly, homodimer.

It carries out the reaction a pseudouridine in rRNA + S-adenosyl-L-methionine = an N(1)-methylpseudouridine in rRNA + S-adenosyl-L-homocysteine + H(+). In terms of biological role, methyltransferase involved in ribosomal biogenesis. Specifically catalyzes the N1-methylation of the pseudouridine corresponding to position 914 in M.jannaschii 16S rRNA. This chain is Ribosomal RNA small subunit methyltransferase Nep1, found in Pyrobaculum calidifontis (strain DSM 21063 / JCM 11548 / VA1).